Here is a 409-residue protein sequence, read N- to C-terminus: Argininosuccinate synthase (409 aa).

Residues 11-19 (AYSGGLDTS) and Ala-38 each bind ATP. L-citrulline contacts are provided by Tyr-91 and Ser-96. An ATP-binding site is contributed by Gly-121. Residues Thr-123, Asn-127, and Asp-128 each coordinate L-aspartate. Asn-127 serves as a coordination point for L-citrulline. L-citrulline contacts are provided by Arg-131, Ser-182, Ser-191, Glu-267, and Tyr-279.

The protein belongs to the argininosuccinate synthase family. Type 1 subfamily. In terms of assembly, homotetramer.

It localises to the cytoplasm. It catalyses the reaction L-citrulline + L-aspartate + ATP = 2-(N(omega)-L-arginino)succinate + AMP + diphosphate + H(+). The protein operates within amino-acid biosynthesis; L-arginine biosynthesis; L-arginine from L-ornithine and carbamoyl phosphate: step 2/3. This is Argininosuccinate synthase from Xanthobacter autotrophicus (strain ATCC BAA-1158 / Py2).